The sequence spans 211 residues: ATP phosphoribosyltransferase (211 aa).

Belongs to the ATP phosphoribosyltransferase family. Short subfamily. Heteromultimer composed of HisG and HisZ subunits.

Its subcellular location is the cytoplasm. The catalysed reaction is 1-(5-phospho-beta-D-ribosyl)-ATP + diphosphate = 5-phospho-alpha-D-ribose 1-diphosphate + ATP. It participates in amino-acid biosynthesis; L-histidine biosynthesis; L-histidine from 5-phospho-alpha-D-ribose 1-diphosphate: step 1/9. In terms of biological role, catalyzes the condensation of ATP and 5-phosphoribose 1-diphosphate to form N'-(5'-phosphoribosyl)-ATP (PR-ATP). Has a crucial role in the pathway because the rate of histidine biosynthesis seems to be controlled primarily by regulation of HisG enzymatic activity. The polypeptide is ATP phosphoribosyltransferase (Pseudomonas fluorescens (strain Pf0-1)).